Here is a 172-residue protein sequence, read N- to C-terminus: Spore coat protein X (172 aa).

The protein resides in the spore coat. This Bacillus subtilis (strain 168) protein is Spore coat protein X (cotX).